Reading from the N-terminus, the 180-residue chain is NAD(P)H-quinone oxidoreductase subunit I, chloroplastic (180 aa).

4Fe-4S ferredoxin-type domains are found at residues 55-84 and 95-124; these read GRIH…VNWR and LNYS…MTEE. [4Fe-4S] cluster contacts are provided by C64, C67, C70, C74, C104, C107, C110, and C114.

It belongs to the complex I 23 kDa subunit family. As to quaternary structure, NDH is composed of at least 16 different subunits, 5 of which are encoded in the nucleus. The cofactor is [4Fe-4S] cluster.

The protein localises to the plastid. Its subcellular location is the chloroplast thylakoid membrane. The catalysed reaction is a plastoquinone + NADH + (n+1) H(+)(in) = a plastoquinol + NAD(+) + n H(+)(out). It catalyses the reaction a plastoquinone + NADPH + (n+1) H(+)(in) = a plastoquinol + NADP(+) + n H(+)(out). In terms of biological role, NDH shuttles electrons from NAD(P)H:plastoquinone, via FMN and iron-sulfur (Fe-S) centers, to quinones in the photosynthetic chain and possibly in a chloroplast respiratory chain. The immediate electron acceptor for the enzyme in this species is believed to be plastoquinone. Couples the redox reaction to proton translocation, and thus conserves the redox energy in a proton gradient. This is NAD(P)H-quinone oxidoreductase subunit I, chloroplastic from Platanus occidentalis (Sycamore).